We begin with the raw amino-acid sequence, 371 residues long: Cytochrome b (371 aa).

4 helical membrane-spanning segments follow: residues 25–45 (FGSMLLTCLVLQVLTGFFLAV), 69–90 (WMMQNLHAIGASMFFICIYIHI), 105–125 (WMSGITLLITLMATALFGYVL), and 170–190 (FFALHFILPFAIISLSSLHII). Positions 75 and 89 each coordinate heme b. Residues His174 and His188 each coordinate heme b. His193 serves as a coordination point for a ubiquinone. 4 helical membrane-spanning segments follow: residues 218–238 (HKDLLLLTLMMMFLFIIVSFF), 280–300 (LGGALALVASIMILFTTPFTH), 312–332 (LSQLMFWTLVSTFITITWAAT), and 339–358 (FIAISQVTSMLYFTFFLSIP).

The protein belongs to the cytochrome b family. As to quaternary structure, the cytochrome bc1 complex contains 3 respiratory subunits (MT-CYB, CYC1 and UQCRFS1), 2 core proteins (UQCRC1 and UQCRC2) and probably 6 low-molecular weight proteins. Requires heme b as cofactor.

It localises to the mitochondrion inner membrane. Functionally, component of the ubiquinol-cytochrome c reductase complex (complex III or cytochrome b-c1 complex) that is part of the mitochondrial respiratory chain. The b-c1 complex mediates electron transfer from ubiquinol to cytochrome c. Contributes to the generation of a proton gradient across the mitochondrial membrane that is then used for ATP synthesis. The chain is Cytochrome b (MT-CYB) from Liasis olivaceus (Olive python).